Reading from the N-terminus, the 121-residue chain is MQARAVRRHIRSSPLKMRRVINLVRDRSVPEAVAILDYMPQKVTGVVEKTIRSAVYNLMDQHDERFDEGALKLKEIRADEGPTFQRHQARARGRAAPIRKRTTHLKVVVAVEEEAPEEAAA.

This sequence belongs to the universal ribosomal protein uL22 family. As to quaternary structure, part of the 50S ribosomal subunit.

Its function is as follows. This protein binds specifically to 23S rRNA; its binding is stimulated by other ribosomal proteins, e.g. L4, L17, and L20. It is important during the early stages of 50S assembly. It makes multiple contacts with different domains of the 23S rRNA in the assembled 50S subunit and ribosome. In terms of biological role, the globular domain of the protein is located near the polypeptide exit tunnel on the outside of the subunit, while an extended beta-hairpin is found that lines the wall of the exit tunnel in the center of the 70S ribosome. The protein is Large ribosomal subunit protein uL22 of Salinibacter ruber (strain DSM 13855 / M31).